Consider the following 489-residue polypeptide: Beta-dihydromenaquinone-9 omega-hydroxylase (489 aa).

C435 is a binding site for heme.

The protein belongs to the cytochrome P450 family. It depends on heme as a cofactor.

The protein resides in the cytoplasm. The enzyme catalyses beta-dihydromenaquinone-9 + 2 reduced [2Fe-2S]-[ferredoxin] + O2 + 2 H(+) = omega-hydroxy-beta-dihydromenaquinone-9 + 2 oxidized [2Fe-2S]-[ferredoxin] + H2O. Involved in the biosynthesis of sulfomenaquinone (SMK, initially named S881 on the basis of its mass), which is localized in the outer envelope of M.bovis and negatively regulates its virulence. Catalyzes the hydroxylation of beta-dihydromenaquinone-9, leading to the formation of omega-hydroxy-beta-dihydromenaquinone-9. This Mycobacterium bovis (strain ATCC BAA-935 / AF2122/97) protein is Beta-dihydromenaquinone-9 omega-hydroxylase (cyp128).